The sequence spans 335 residues: Methionine aminopeptidase 1D, mitochondrial (335 aa).

Residues M1–F19 constitute a mitochondrion transit peptide. H161 contributes to the substrate binding site. A divalent metal cation-binding residues include D178, D189, and H252. Substrate is bound at residue H259. Residues E284 and E315 each contribute to the a divalent metal cation site.

Belongs to the peptidase M24A family. Methionine aminopeptidase type 1 subfamily. Co(2+) serves as cofactor. The cofactor is Zn(2+). It depends on Mn(2+) as a cofactor. Requires Fe(2+) as cofactor. As to expression, overexpressed in colon cancer cell lines and colon tumors as compared to normal tissues (at protein level).

Its subcellular location is the mitochondrion. The enzyme catalyses Release of N-terminal amino acids, preferentially methionine, from peptides and arylamides.. Functionally, removes the N-terminal methionine from nascent proteins. The N-terminal methionine is often cleaved when the second residue in the primary sequence is small and uncharged (Met-Ala-, Cys, Gly, Pro, Ser, Thr, or Val). Requires deformylation of the N(alpha)-formylated initiator methionine before it can be hydrolyzed. May play a role in colon tumorigenesis. The chain is Methionine aminopeptidase 1D, mitochondrial (METAP1D) from Homo sapiens (Human).